Reading from the N-terminus, the 325-residue chain is Thiamine-monophosphate kinase (325 aa).

Mg(2+)-binding residues include aspartate 27 and aspartate 44. Position 51 (histidine 51) interacts with substrate. Residue aspartate 73 coordinates Mg(2+). Residues tyrosine 103, 120 to 121 (GD), and arginine 147 each bind ATP. Aspartate 121 provides a ligand contact to Mg(2+). Residue aspartate 215 coordinates Mg(2+). ATP is bound at residue serine 217. Aspartate 218 contacts Mg(2+). Positions 264 and 321 each coordinate substrate.

It belongs to the thiamine-monophosphate kinase family.

The enzyme catalyses thiamine phosphate + ATP = thiamine diphosphate + ADP. Its pathway is cofactor biosynthesis; thiamine diphosphate biosynthesis; thiamine diphosphate from thiamine phosphate: step 1/1. Catalyzes the ATP-dependent phosphorylation of thiamine-monophosphate (TMP) to form thiamine-pyrophosphate (TPP), the active form of vitamin B1. The sequence is that of Thiamine-monophosphate kinase from Bacillus subtilis (strain 168).